Consider the following 732-residue polypeptide: DNA ligase (732 aa).

NAD(+) is bound by residues 47-51 (DAEYD), 96-97 (SI), and glutamate 133. Lysine 135 (N6-AMP-lysine intermediate) is an active-site residue. 4 residues coordinate NAD(+): arginine 156, glutamate 196, lysine 317, and lysine 341. Cysteine 470, cysteine 473, cysteine 488, and cysteine 494 together coordinate Zn(2+). The region spanning 653–732 (RATLPLAGKT…AGMLALLQGR (80 aa)) is the BRCT domain.

It belongs to the NAD-dependent DNA ligase family. LigA subfamily. Mg(2+) serves as cofactor. Requires Mn(2+) as cofactor.

The catalysed reaction is NAD(+) + (deoxyribonucleotide)n-3'-hydroxyl + 5'-phospho-(deoxyribonucleotide)m = (deoxyribonucleotide)n+m + AMP + beta-nicotinamide D-nucleotide.. Its function is as follows. DNA ligase that catalyzes the formation of phosphodiester linkages between 5'-phosphoryl and 3'-hydroxyl groups in double-stranded DNA using NAD as a coenzyme and as the energy source for the reaction. It is essential for DNA replication and repair of damaged DNA. The chain is DNA ligase from Paracidovorax citrulli (strain AAC00-1) (Acidovorax citrulli).